Consider the following 622-residue polypeptide: Low affinity potassium transport system protein Kup (622 aa).

12 helical membrane passes run 9–29, 52–72, 99–119, 137–157, 165–185, 213–233, 247–267, 276–296, 337–357, 363–383, 394–414, and 419–439; these read LPAV…TSPL, FLSL…LLFV, TPVL…EVVI, PSLQ…LFFI, VGKL…VLGV, VSFF…ALYA, WFSA…ALLL, PFFL…ATLA, IYIP…IVSF, LAAA…ILSC, LLIV…MFAA, and IFSG…AMIT.

It belongs to the HAK/KUP transporter (TC 2.A.72) family.

The protein resides in the cell inner membrane. The enzyme catalyses K(+)(in) + H(+)(in) = K(+)(out) + H(+)(out). In terms of biological role, responsible for the low-affinity transport of potassium into the cell. Likely operates as a K(+):H(+) symporter. This is Low affinity potassium transport system protein Kup from Sodalis glossinidius (strain morsitans).